The sequence spans 285 residues: G patch domain-containing protein 11 (285 aa).

The stretch at 51-87 forms a coiled coil; the sequence is MLRQIREARRKEEKQQEANLKNRQKSLKEEEQERRDI. A disordered region spans residues 59 to 84; it reads RRKEEKQQEANLKNRQKSLKEEEQER. The G-patch domain occupies 95-141; sequence CENKGFALLQKMGYKSGQALGKSGGGIVEPIPLNIKTGKSGIGHEAS. Ser-141 is modified (phosphoserine). Lys-149 is subject to N6-acetyllysine. Residues 218–235 are compositionally biased toward acidic residues; sequence EETEEDEEEKEQDEDEYK. The interval 218-237 is disordered; sequence EETEEDEEEKEQDEDEYKSE.

This sequence belongs to the GPATCH11 family.

The protein localises to the chromosome. The protein resides in the centromere. It localises to the kinetochore. The sequence is that of G patch domain-containing protein 11 (GPATCH11) from Homo sapiens (Human).